The following is a 242-amino-acid chain: UPF0246 protein SPH_1662 (242 aa).

This sequence belongs to the UPF0246 family.

The sequence is that of UPF0246 protein SPH_1662 from Streptococcus pneumoniae (strain Hungary19A-6).